The primary structure comprises 892 residues: Formin-like protein 8 (892 aa).

Residues 1-23 (MPPAIARFVAIAAVLLCGHVAVA) form the signal peptide. The segment at 43 to 119 (FPIEWTPPPS…SGSGSGHHGG (77 aa)) is disordered. Residues 47–59 (WTPPPSPPPPPAP) are compositionally biased toward pro residues. A compositionally biased stretch (low complexity) spans 87 to 111 (TTPTSPGTTPSPTTVAADVSKTPSG). A helical membrane pass occupies residues 126-146 (IVAAGAGAAAAVALLGFACAF). Residues 188 to 457 (PTTPARHHGP…GSGEPRPKLK (270 aa)) form a disordered region. Over residues 210–230 (LRSERARRGVSRDEDADHPSP) the composition is skewed to basic and acidic residues. Low complexity-rich tracts occupy residues 268-286 (AEAW…TTAS), 297-306 (FFPPVAAIAA), and 321-330 (RTRFSTGSTP). The span at 339 to 383 (SPRPVQPSNAPPPPPPPPPPPPPPPPPKLNTAPKPPPPPPPPPSV) shows a compositional bias: pro residues. Residues 424 to 436 (AATTVDNNGSTSM) are compositionally biased toward polar residues. One can recognise an FH2 domain in the interval 446 to 867 (DGGSGEPRPK…GSARSFRISA (422 aa)).

This sequence belongs to the formin-like family. Class-I subfamily.

Its subcellular location is the membrane. This Oryza sativa subsp. japonica (Rice) protein is Formin-like protein 8 (FH8).